Reading from the N-terminus, the 309-residue chain is tRNA pseudouridine synthase B (309 aa).

The active-site Nucleophile is Asp51.

It belongs to the pseudouridine synthase TruB family. Type 1 subfamily.

The catalysed reaction is uridine(55) in tRNA = pseudouridine(55) in tRNA. Responsible for synthesis of pseudouridine from uracil-55 in the psi GC loop of transfer RNAs. The chain is tRNA pseudouridine synthase B from Coxiella burnetii (strain RSA 331 / Henzerling II).